A 580-amino-acid chain; its full sequence is PX domain-containing protein kinase-like protein (580 aa).

Residues 14–126 (LDDTVPLTAA…KFLDPNNYSA (113 aa)) form the PX domain. One can recognise a Protein kinase domain in the interval 88–481 (FIAERQKGLQ…VENSEEQPVK (394 aa)). The interval 433–551 (EQKQIHQHRR…LPQAVNGVNR (119 aa)) is disordered. 2 stretches are compositionally biased toward basic residues: residues 437-448 (IHQHRRLTRAQS) and 457-469 (KRRK…KSKR). Residues 483 to 514 (SNANNSAGSGASSPLTSPSSPTPPSTAGLSSA) show a composition bias toward low complexity. The span at 515 to 531 (LPPPPPPPPPPPPPAGP) shows a compositional bias: pro residues. The region spanning 549-568 (VNRGALLSSIQNFQKGTLRK) is the WH2 domain.

The protein belongs to the protein kinase superfamily.

It is found in the cytoplasm. It localises to the cell membrane. Binds to and modulates brain Na,K-ATPase subunits ATP1B1 and ATP1B3 and may thereby participate in the regulation of electrical excitability and synaptic transmission. May not display kinase activity. This Rattus norvegicus (Rat) protein is PX domain-containing protein kinase-like protein.